The chain runs to 356 residues: D-alanine--D-alanine ligase (356 aa).

An ATP-grasp domain is found at 134-339 (KQLFEHRGLP…YPELITKLIE (206 aa)). 167–222 (NDKLNYPVFVKPANLGSSIGISKCSNEVELKEGIKEAFQFDRKLVIEQGVNAREIE) contacts ATP. Positions 293, 306, and 308 each coordinate Mg(2+).

This sequence belongs to the D-alanine--D-alanine ligase family. Mg(2+) serves as cofactor. It depends on Mn(2+) as a cofactor.

It localises to the cytoplasm. The catalysed reaction is 2 D-alanine + ATP = D-alanyl-D-alanine + ADP + phosphate + H(+). Its pathway is cell wall biogenesis; peptidoglycan biosynthesis. Its function is as follows. Cell wall formation. This is D-alanine--D-alanine ligase from Staphylococcus aureus (strain MRSA252).